Here is a 208-residue protein sequence, read N- to C-terminus: Uracil phosphoribosyltransferase (208 aa).

5-phospho-alpha-D-ribose 1-diphosphate contacts are provided by residues arginine 78, arginine 103, and 130 to 138 (DPMLATANS). Residues isoleucine 193 and 198 to 200 (GDA) each bind uracil. 5-phospho-alpha-D-ribose 1-diphosphate is bound at residue aspartate 199.

The protein belongs to the UPRTase family. Mg(2+) serves as cofactor.

The catalysed reaction is UMP + diphosphate = 5-phospho-alpha-D-ribose 1-diphosphate + uracil. Its pathway is pyrimidine metabolism; UMP biosynthesis via salvage pathway; UMP from uracil: step 1/1. Its activity is regulated as follows. Allosterically activated by GTP. Its function is as follows. Catalyzes the conversion of uracil and 5-phospho-alpha-D-ribose 1-diphosphate (PRPP) to UMP and diphosphate. This chain is Uracil phosphoribosyltransferase, found in Brucella abortus biovar 1 (strain 9-941).